A 137-amino-acid polypeptide reads, in one-letter code: Ribosomal RNA large subunit methyltransferase H (137 aa).

Residues L56, G85, and 104-109 (LSPLTF) each bind S-adenosyl-L-methionine.

Belongs to the RNA methyltransferase RlmH family. Homodimer.

The protein resides in the cytoplasm. The enzyme catalyses pseudouridine(1915) in 23S rRNA + S-adenosyl-L-methionine = N(3)-methylpseudouridine(1915) in 23S rRNA + S-adenosyl-L-homocysteine + H(+). In terms of biological role, specifically methylates the pseudouridine at position 1915 (m3Psi1915) in 23S rRNA. This is Ribosomal RNA large subunit methyltransferase H from Prochlorococcus marinus (strain MIT 9515).